The sequence spans 246 residues: Exosome complex component Rrp41 (246 aa).

This sequence belongs to the RNase PH family. Rrp41 subfamily. In terms of assembly, component of the archaeal exosome complex. Forms a hexameric ring-like arrangement composed of 3 Rrp41-Rrp42 heterodimers. The hexameric ring associates with a trimer of Rrp4 and/or Csl4 subunits.

It is found in the cytoplasm. Catalytic component of the exosome, which is a complex involved in RNA degradation. Has 3'-&gt;5' exoribonuclease activity. Can also synthesize heteromeric RNA-tails. This chain is Exosome complex component Rrp41, found in Pyrobaculum islandicum (strain DSM 4184 / JCM 9189 / GEO3).